The following is a 134-amino-acid chain: Protein PsiB (134 aa).

Its function is as follows. Could be involved directly or indirectly in exopolysaccharide synthesis. The polypeptide is Protein PsiB (psiB) (Rhizobium leguminosarum bv. phaseoli).